We begin with the raw amino-acid sequence, 475 residues long: Ribulose bisphosphate carboxylase large chain (475 aa).

Positions 1–2 (MS) are excised as a propeptide. Proline 3 carries the post-translational modification N-acetylproline. Lysine 14 is modified (N6,N6,N6-trimethyllysine). The substrate site is built by asparagine 123 and threonine 173. Lysine 175 serves as the catalytic Proton acceptor. Lysine 177 provides a ligand contact to substrate. Mg(2+)-binding residues include lysine 201, aspartate 203, and glutamate 204. Lysine 201 bears the N6-carboxylysine mark. Histidine 294 functions as the Proton acceptor in the catalytic mechanism. Substrate is bound by residues arginine 295, histidine 327, and serine 379.

This sequence belongs to the RuBisCO large chain family. Type I subfamily. In terms of assembly, heterohexadecamer of 8 large chains and 8 small chains; disulfide-linked. The disulfide link is formed within the large subunit homodimers. It depends on Mg(2+) as a cofactor. In terms of processing, the disulfide bond which can form in the large chain dimeric partners within the hexadecamer appears to be associated with oxidative stress and protein turnover.

The protein resides in the plastid. It localises to the chloroplast. The enzyme catalyses 2 (2R)-3-phosphoglycerate + 2 H(+) = D-ribulose 1,5-bisphosphate + CO2 + H2O. It catalyses the reaction D-ribulose 1,5-bisphosphate + O2 = 2-phosphoglycolate + (2R)-3-phosphoglycerate + 2 H(+). In terms of biological role, ruBisCO catalyzes two reactions: the carboxylation of D-ribulose 1,5-bisphosphate, the primary event in carbon dioxide fixation, as well as the oxidative fragmentation of the pentose substrate in the photorespiration process. Both reactions occur simultaneously and in competition at the same active site. The sequence is that of Ribulose bisphosphate carboxylase large chain from Quercus rubra (Northern red oak).